The chain runs to 199 residues: GTP cyclohydrolase-2 (199 aa).

A GTP-binding site is contributed by 49–53 (RIHSE). Zn(2+)-binding residues include C54, C65, and C67. Residues Q70, 92-94 (EGR), and T114 each bind GTP. The active-site Proton acceptor is D126. R128 acts as the Nucleophile in catalysis. Positions 149 and 154 each coordinate GTP.

Belongs to the GTP cyclohydrolase II family. In terms of assembly, homodimer. It depends on Zn(2+) as a cofactor.

The catalysed reaction is GTP + 4 H2O = 2,5-diamino-6-hydroxy-4-(5-phosphoribosylamino)-pyrimidine + formate + 2 phosphate + 3 H(+). The protein operates within cofactor biosynthesis; riboflavin biosynthesis; 5-amino-6-(D-ribitylamino)uracil from GTP: step 1/4. Catalyzes the conversion of GTP to 2,5-diamino-6-ribosylamino-4(3H)-pyrimidinone 5'-phosphate (DARP), formate and pyrophosphate. This chain is GTP cyclohydrolase-2, found in Blochmanniella floridana.